The primary structure comprises 134 residues: Arsenate reductase (134 aa).

Residues Cys11, Cys83, and Cys90 each act as nucleophile in the active site. Cystine bridges form between Cys11/Cys83 and Cys83/Cys90.

Belongs to the low molecular weight phosphotyrosine protein phosphatase family. Thioredoxin-coupled ArsC subfamily.

It localises to the cytoplasm. The enzyme catalyses arsenate + [thioredoxin]-dithiol + H(+) = arsenite + [thioredoxin]-disulfide + H2O. In terms of biological role, catalyzes the reduction of arsenate [As(V)] to arsenite [As(III)]. The polypeptide is Arsenate reductase (Bacillus cereus (strain 03BB102)).